The chain runs to 406 residues: Protein PHYTOCHROME KINASE SUBSTRATE 4 (406 aa).

Residues 106-119 (SWNSQTGLLSNKNR) show a composition bias toward polar residues. Positions 106-133 (SWNSQTGLLSNKNRQGSDRDGRRSSKKG) are disordered.

The protein belongs to the PKS family. As to quaternary structure, interacts in vitro with PHYA and PHYB. As to expression, expressed in the hypocotyl elongation zone. Not found in the root elongation zone.

Its function is as follows. Modulates phytochrome-mediated control of hypocotyl growth orientation. Involved in PHYA and PHYB signaling. Acts as an inhibitor of asymmetric growth. Not involved in the control of leaf flattening. The protein is Protein PHYTOCHROME KINASE SUBSTRATE 4 (PKS4) of Arabidopsis thaliana (Mouse-ear cress).